Consider the following 459-residue polypeptide: tRNA modification GTPase MnmE (459 aa).

The (6S)-5-formyl-5,6,7,8-tetrahydrofolate site is built by arginine 29, glutamate 91, and arginine 130. A TrmE-type G domain is found at 225 to 381 (GVKVAIVGRP…LEEALEQLVT (157 aa)). K(+) is bound at residue asparagine 235. Residues 235 to 240 (NVGKSS), 254 to 260 (TDLPGTT), and 279 to 282 (DTAG) contribute to the GTP site. Residue serine 239 coordinates Mg(2+). Threonine 254, leucine 256, and threonine 259 together coordinate K(+). Threonine 260 contributes to the Mg(2+) binding site. A (6S)-5-formyl-5,6,7,8-tetrahydrofolate-binding site is contributed by lysine 459.

It belongs to the TRAFAC class TrmE-Era-EngA-EngB-Septin-like GTPase superfamily. TrmE GTPase family. As to quaternary structure, homodimer. Heterotetramer of two MnmE and two MnmG subunits. It depends on K(+) as a cofactor.

The protein localises to the cytoplasm. Its function is as follows. Exhibits a very high intrinsic GTPase hydrolysis rate. Involved in the addition of a carboxymethylaminomethyl (cmnm) group at the wobble position (U34) of certain tRNAs, forming tRNA-cmnm(5)s(2)U34. The chain is tRNA modification GTPase MnmE from Synechococcus sp. (strain JA-3-3Ab) (Cyanobacteria bacterium Yellowstone A-Prime).